The following is a 906-amino-acid chain: Serine-aspartate repeat-containing protein C (906 aa).

Positions 1–50 (MNNKKTATNRKGMIPNRLNKFSIRKYSVGTASILVGTTLIFGLSGHEAKA) are cleaved as a signal peptide. Residues 51-127 (AEHTNGELNQ…QPTKKNNDAT (77 aa)) form a disordered region. The interval 51 to 486 (AEHTNGELNQ…GSSTANGDQK (436 aa)) is ligand binding A region. Composition is skewed to polar residues over residues 56 to 71 (GELN…PSEN) and 80 to 119 (RQQN…STQP). CNA-B domains follow at residues 487–597 (KYNL…YKTP) and 598–708 (KYSL…EEET). The interval 669–881 (KQTGTNTTED…TGSENNGSNN (213 aa)) is disordered. Composition is skewed to acidic residues over residues 676 to 686 (TEDDKDADGGE) and 703 to 845 (YFEE…DSDS). The LPXTG sorting signal signature appears at 869–873 (LPETG). Thr872 carries the post-translational modification Pentaglycyl murein peptidoglycan amidated threonine. The propeptide at 873–906 (GSENNGSNNATLFGGLFAALGSLLLFGRRKKQNK) is removed by sortase.

The protein belongs to the serine-aspartate repeat-containing protein (SDr) family. Homodimerizes; via N2-Domain. Interacts with host NRXN1; this interaction mediates bacterial attachment to host cells.

The protein localises to the secreted. Its subcellular location is the cell wall. Cell surface-associated calcium-binding protein which plays an important role in adhesion and pathogenesis. Mediates interactions with components of the extracellular matrix such as host NRXN1 to promote bacterial adhesion. This chain is Serine-aspartate repeat-containing protein C (sdrC), found in Staphylococcus aureus (strain MRSA252).